The following is a 146-amino-acid chain: Flagellar assembly factor FliW (146 aa).

The protein belongs to the FliW family. As to quaternary structure, interacts with translational regulator CsrA and flagellin(s).

Its subcellular location is the cytoplasm. Functionally, acts as an anti-CsrA protein, binds CsrA and prevents it from repressing translation of its target genes, one of which is flagellin. Binds to flagellin and participates in the assembly of the flagellum. The chain is Flagellar assembly factor FliW from Azoarcus sp. (strain BH72).